The sequence spans 279 residues: Pantothenate synthetase (279 aa).

26-33 is a binding site for ATP; sequence MGNLHDGH. The active-site Proton donor is the His-33. A (R)-pantoate-binding site is contributed by Gln-57. Gln-57 is a beta-alanine binding site. ATP is bound at residue 144–147; the sequence is GKKD. Gln-150 contributes to the (R)-pantoate binding site. An ATP-binding site is contributed by 181 to 184; sequence LSSR.

It belongs to the pantothenate synthetase family. Homodimer.

It localises to the cytoplasm. It carries out the reaction (R)-pantoate + beta-alanine + ATP = (R)-pantothenate + AMP + diphosphate + H(+). Its pathway is cofactor biosynthesis; (R)-pantothenate biosynthesis; (R)-pantothenate from (R)-pantoate and beta-alanine: step 1/1. Functionally, catalyzes the condensation of pantoate with beta-alanine in an ATP-dependent reaction via a pantoyl-adenylate intermediate. This is Pantothenate synthetase from Herminiimonas arsenicoxydans.